Consider the following 175-residue polypeptide: MTDCEFGYIYRLAQDYLQCVLQIPQPGSGPSKTSRVLQNVAFSVQKEVEKNLKSCLDNVNVVSVDTARTLFNQVMEKEFEDGIINWGRIVTIFAFEGILIKKLLRQQIAPDVDTYKEISYFVAEFIMNNTGEWIRQNGGWENGFVKKFEPKSGWMTFLEVTGKICEMLSLLKQYC.

The BH1 motif lies at 77-97; the sequence is KEFEDGIINWGRIVTIFAFEG. Residues 132–147 carry the BH2 motif; that stretch reads EWIRQNGGWENGFVKK.

The protein belongs to the Bcl-2 family. As to quaternary structure, interacts directly with BAK1, BID, BMF and BBC3. Interacts directly with BCL2L11/BIM. Interacts with BAX isoform Sigma. Interacts directly with PMAIP1. Interacts with RTL10/BOP. Interacts with ING4. Interacts with UBQLN4. Seems to be restricted to the hematopoietic compartment. Expressed in peripheral blood, spleen, and bone marrow, at moderate levels in lung, small intestine and testis, at a minimal levels in other tissues. Also found in vascular smooth muscle cells and hematopoietic malignancies.

The protein localises to the cytoplasm. Its function is as follows. Retards apoptosis induced by IL-3 deprivation. May function in the response of hemopoietic cells to external signals and in maintaining endothelial survival during infection. Can inhibit apoptosis induced by serum starvation in the mammary epithelial cell line HC11. This chain is Bcl-2-related protein A1 (BCL2A1), found in Homo sapiens (Human).